Here is a 61-residue protein sequence, read N- to C-terminus: Small ribosomal subunit protein uS14C (61 aa).

Residues C24, C27, C40, and C43 each contribute to the Zn(2+) site.

This sequence belongs to the universal ribosomal protein uS14 family. Zinc-binding uS14 subfamily. In terms of assembly, part of the 30S ribosomal subunit. Contacts proteins S3 and S10. It depends on Zn(2+) as a cofactor.

Binds 16S rRNA, required for the assembly of 30S particles and may also be responsible for determining the conformation of the 16S rRNA at the A site. The chain is Small ribosomal subunit protein uS14C from Bacillus licheniformis (strain ATCC 14580 / DSM 13 / JCM 2505 / CCUG 7422 / NBRC 12200 / NCIMB 9375 / NCTC 10341 / NRRL NRS-1264 / Gibson 46).